The primary structure comprises 342 residues: Foldase protein PrsA (342 aa).

The first 22 residues, 1-22 (MVSVKKIVASALVGVLMFSAVG), serve as a signal peptide directing secretion. C23 carries the N-palmitoyl cysteine lipid modification. A lipid anchor (S-diacylglycerol cysteine) is attached at C23. Residues 190 to 284 (AKGVLARHLL…FGYHIIQAGA (95 aa)) enclose the PpiC domain.

This sequence belongs to the PrsA family.

It localises to the cell membrane. It carries out the reaction [protein]-peptidylproline (omega=180) = [protein]-peptidylproline (omega=0). Its function is as follows. Plays a major role in protein secretion by helping the post-translocational extracellular folding of several secreted proteins. The polypeptide is Foldase protein PrsA (Clostridium perfringens (strain SM101 / Type A)).